A 197-amino-acid polypeptide reads, in one-letter code: MKDLTERQRKVLLFIEEFIEKNGYPPSVREIARRFRITPRGALLHLIALEKKGYIERKNGKPRALRISKSIRNKIPLIGEIRAGEKREAIEYLEDYIEIPESFLSSGYDHFLLKVKGESMIEEHICDGDLVLVRRQDWAQNGDIVAAMVDGEVTLKKFYQRGDTVELRPANREMSSMFFRAEKVKILGKVVGVFRKL.

The H-T-H motif DNA-binding region spans 28-47 (VREIARRFRITPRGALLHLI). Catalysis depends on for autocatalytic cleavage activity residues serine 119 and lysine 156.

Belongs to the peptidase S24 family. In terms of assembly, homodimer.

It catalyses the reaction Hydrolysis of Ala-|-Gly bond in repressor LexA.. Represses a number of genes involved in the response to DNA damage (SOS response), including recA and lexA. In the presence of single-stranded DNA, RecA interacts with LexA causing an autocatalytic cleavage which disrupts the DNA-binding part of LexA, leading to derepression of the SOS regulon and eventually DNA repair. The protein is LexA repressor of Thermotoga maritima (strain ATCC 43589 / DSM 3109 / JCM 10099 / NBRC 100826 / MSB8).